The following is a 363-amino-acid chain: Chorismate synthase (363 aa).

The tract at residues 44 to 63 is disordered; that stretch reads DLDRRKPGTSRHTTQRQEPD. The NADP(+) site is built by R48 and R54. FMN contacts are provided by residues 125-127, 237-238, G277, 292-296, and R318; these read RSS, NA, and KATSS.

This sequence belongs to the chorismate synthase family. In terms of assembly, homotetramer. The cofactor is FMNH2.

It catalyses the reaction 5-O-(1-carboxyvinyl)-3-phosphoshikimate = chorismate + phosphate. The protein operates within metabolic intermediate biosynthesis; chorismate biosynthesis; chorismate from D-erythrose 4-phosphate and phosphoenolpyruvate: step 7/7. Its function is as follows. Catalyzes the anti-1,4-elimination of the C-3 phosphate and the C-6 proR hydrogen from 5-enolpyruvylshikimate-3-phosphate (EPSP) to yield chorismate, which is the branch point compound that serves as the starting substrate for the three terminal pathways of aromatic amino acid biosynthesis. This reaction introduces a second double bond into the aromatic ring system. This Pseudomonas fluorescens (strain SBW25) protein is Chorismate synthase.